Here is an 874-residue protein sequence, read N- to C-terminus: Probable inorganic carbon transporter subunit DabA (874 aa).

4 residues coordinate Zn(2+): C398, D400, H580, and C595.

The protein belongs to the inorganic carbon transporter (TC 9.A.2) DabA family. Forms a complex with DabB. Zn(2+) serves as cofactor.

It is found in the cell membrane. Functionally, part of an energy-coupled inorganic carbon pump. This is Probable inorganic carbon transporter subunit DabA from Bacillus thuringiensis subsp. konkukian (strain 97-27).